An 843-amino-acid chain; its full sequence is Receptor-like serine/threonine-protein kinase SD1-7 (843 aa).

The first 31 residues, 1–31 (MRSVPNYHHSFFIFLILILFLAFSVSPNTLS), serve as a signal peptide directing secretion. The 120-residue stretch at 32–151 (ATESLTISSN…NNRLLWQSFD (120 aa)) folds into the Bulb-type lectin domain. At 32–435 (ATESLTISSN…LEDKRIKNEK (404 aa)) the chain is on the extracellular side. N-linked (GlcNAc...) asparagine glycans are attached at residues Asn41, Asn92, Asn116, Asn236, and Asn251. One can recognise an EGF-like; atypical domain in the interval 286–322 (PKDLCDNYKVCGNFGYCDSNSLPNCYCIKGFKPVNEQ). Intrachain disulfides connect Cys290/Cys302, Cys296/Cys310, Cys372/Cys397, and Cys376/Cys382. The PAN domain maps to 341–422 (CDGRDGFTRL…GGQDLYVRLA (82 aa)). Asn381 carries an N-linked (GlcNAc...) asparagine glycan. A helical transmembrane segment spans residues 436 to 456 (IIGSSIGVSILLLLSFVIFHF). The Cytoplasmic segment spans residues 457-843 (WKRKQKRSIT…QITLSVIDAR (387 aa)). The 291-residue stretch at 519–809 (FSNDNKLGQG…AIPQPKRPGF (291 aa)) folds into the Protein kinase domain. ATP-binding positions include 525 to 533 (LGQGGFGIV) and Lys547. Residue Ser553 is modified to Phosphoserine. A caM-binding region spans residues 608–625 (TRSSNLNWQKRFDIINGI). Residue Asp644 is the Proton acceptor of the active site. Phosphoserine occurs at positions 648 and 661. A Phosphothreonine modification is found at Thr678. Residue Ser820 is modified to Phosphoserine.

It belongs to the protein kinase superfamily. Ser/Thr protein kinase family. As to quaternary structure, interacts with PUB9, PUB13, PUB14 and PUB38. Post-translationally, autophosphorylated on serine and threonine residues. As to expression, mostly expressed in leaves, and, to a lower extent, in stems and flower buds.

The protein localises to the cell membrane. The catalysed reaction is L-seryl-[protein] + ATP = O-phospho-L-seryl-[protein] + ADP + H(+). It catalyses the reaction L-threonyl-[protein] + ATP = O-phospho-L-threonyl-[protein] + ADP + H(+). Involved in the regulation of cellular expansion and differentiation. Mediates subcellular relocalization of PUB9 from nucleus to plasma membrane in a protein-phosphorylation-dependent manner. May be involved in the abscisic acid-mediated signaling pathway, at least during germination. The protein is Receptor-like serine/threonine-protein kinase SD1-7 (SD17) of Arabidopsis thaliana (Mouse-ear cress).